We begin with the raw amino-acid sequence, 148 residues long: 3-hydroxyacyl-[acyl-carrier-protein] dehydratase FabZ (148 aa).

Residue histidine 48 is part of the active site.

The protein belongs to the thioester dehydratase family. FabZ subfamily.

The protein localises to the cytoplasm. It carries out the reaction a (3R)-hydroxyacyl-[ACP] = a (2E)-enoyl-[ACP] + H2O. Its function is as follows. Involved in unsaturated fatty acids biosynthesis. Catalyzes the dehydration of short chain beta-hydroxyacyl-ACPs and long chain saturated and unsaturated beta-hydroxyacyl-ACPs. The chain is 3-hydroxyacyl-[acyl-carrier-protein] dehydratase FabZ from Campylobacter fetus subsp. fetus (strain 82-40).